The sequence spans 155 residues: Ribosomal RNA large subunit methyltransferase H (155 aa).

Residues Leu-73, Gly-104, and 123 to 128 (LSRMTF) contribute to the S-adenosyl-L-methionine site.

Belongs to the RNA methyltransferase RlmH family. In terms of assembly, homodimer.

The protein localises to the cytoplasm. The enzyme catalyses pseudouridine(1915) in 23S rRNA + S-adenosyl-L-methionine = N(3)-methylpseudouridine(1915) in 23S rRNA + S-adenosyl-L-homocysteine + H(+). Its function is as follows. Specifically methylates the pseudouridine at position 1915 (m3Psi1915) in 23S rRNA. The chain is Ribosomal RNA large subunit methyltransferase H from Methylococcus capsulatus (strain ATCC 33009 / NCIMB 11132 / Bath).